The chain runs to 486 residues: Siroheme synthase (486 aa).

A precorrin-2 dehydrogenase /sirohydrochlorin ferrochelatase region spans residues 1 to 203 (MNYFPIFANL…RQNTLAEREL (203 aa)). NAD(+) contacts are provided by residues 22–23 (AV) and 43–44 (KH). Ser128 bears the Phosphoserine mark. The interval 217–486 (GSVSLVGAGP…LGTGQEQQAA (270 aa)) is uroporphyrinogen-III C-methyltransferase. Pro226 contributes to the S-adenosyl-L-methionine binding site. Asp249 serves as the catalytic Proton acceptor. Catalysis depends on Lys271, which acts as the Proton donor. Residues 302–304 (GGD), Val307, 332–333 (TA), Met384, and Gly413 contribute to the S-adenosyl-L-methionine site.

In the N-terminal section; belongs to the precorrin-2 dehydrogenase / sirohydrochlorin ferrochelatase family. It in the C-terminal section; belongs to the precorrin methyltransferase family.

It catalyses the reaction uroporphyrinogen III + 2 S-adenosyl-L-methionine = precorrin-2 + 2 S-adenosyl-L-homocysteine + H(+). It carries out the reaction precorrin-2 + NAD(+) = sirohydrochlorin + NADH + 2 H(+). The catalysed reaction is siroheme + 2 H(+) = sirohydrochlorin + Fe(2+). It functions in the pathway cofactor biosynthesis; adenosylcobalamin biosynthesis; precorrin-2 from uroporphyrinogen III: step 1/1. The protein operates within cofactor biosynthesis; adenosylcobalamin biosynthesis; sirohydrochlorin from precorrin-2: step 1/1. Its pathway is porphyrin-containing compound metabolism; siroheme biosynthesis; precorrin-2 from uroporphyrinogen III: step 1/1. It participates in porphyrin-containing compound metabolism; siroheme biosynthesis; siroheme from sirohydrochlorin: step 1/1. It functions in the pathway porphyrin-containing compound metabolism; siroheme biosynthesis; sirohydrochlorin from precorrin-2: step 1/1. Functionally, multifunctional enzyme that catalyzes the SAM-dependent methylations of uroporphyrinogen III at position C-2 and C-7 to form precorrin-2 via precorrin-1. Then it catalyzes the NAD-dependent ring dehydrogenation of precorrin-2 to yield sirohydrochlorin. Finally, it catalyzes the ferrochelation of sirohydrochlorin to yield siroheme. This chain is Siroheme synthase, found in Neisseria meningitidis serogroup A / serotype 4A (strain DSM 15465 / Z2491).